The following is a 297-amino-acid chain: ATP phosphoribosyltransferase (297 aa).

Belongs to the ATP phosphoribosyltransferase family.

It is found in the cytoplasm. The catalysed reaction is 1-(5-phospho-beta-D-ribosyl)-ATP + diphosphate = 5-phospho-alpha-D-ribose 1-diphosphate + ATP. Its pathway is amino-acid biosynthesis; L-histidine biosynthesis; L-histidine from 5-phospho-alpha-D-ribose 1-diphosphate: step 1/9. Functionally, catalyzes the condensation of ATP and 5-phosphoribose 1-diphosphate to form N'-(5'-phosphoribosyl)-ATP (PR-ATP). Has a crucial role in the pathway because the rate of histidine biosynthesis seems to be controlled primarily by regulation of the enzymatic activity. The polypeptide is ATP phosphoribosyltransferase (HIS1) (Eremothecium gossypii (strain ATCC 10895 / CBS 109.51 / FGSC 9923 / NRRL Y-1056) (Yeast)).